The primary structure comprises 66 residues: UPF0337 protein SpyM3_1723 (66 aa).

Basic and acidic residues predominate over residues 1–10 (MSEEKLKSKI). The tract at residues 1–23 (MSEEKLKSKIEQASGGLKEGAGK) is disordered.

The protein belongs to the UPF0337 (CsbD) family.

This Streptococcus pyogenes serotype M3 (strain ATCC BAA-595 / MGAS315) protein is UPF0337 protein SpyM3_1723.